The sequence spans 81 residues: Photosystem I iron-sulfur center (81 aa).

2 consecutive 4Fe-4S ferredoxin-type domains span residues 2–31 (SHAVKIYDTCIGCTQCVRACPLDVLEMVPW) and 39–68 (IASSPRTEDCVGCKRCETACPTDFLSIRVY). Residues cysteine 11, cysteine 14, cysteine 17, cysteine 21, cysteine 48, cysteine 51, cysteine 54, and cysteine 58 each coordinate [4Fe-4S] cluster.

As to quaternary structure, the cyanobacterial PSI reaction center is composed of one copy each of PsaA,B,C,D,E,F,I,J,K,L,M and X, and forms trimeric complexes. [4Fe-4S] cluster serves as cofactor.

It is found in the cellular thylakoid membrane. It catalyses the reaction reduced [plastocyanin] + hnu + oxidized [2Fe-2S]-[ferredoxin] = oxidized [plastocyanin] + reduced [2Fe-2S]-[ferredoxin]. In terms of biological role, apoprotein for the two 4Fe-4S centers FA and FB of photosystem I (PSI); essential for photochemical activity. FB is the terminal electron acceptor of PSI, donating electrons to ferredoxin. The C-terminus interacts with PsaA/B/D and helps assemble the protein into the PSI complex. Required for binding of PsaD and PsaE to PSI. PSI is a plastocyanin/cytochrome c6-ferredoxin oxidoreductase, converting photonic excitation into a charge separation, which transfers an electron from the donor P700 chlorophyll pair to the spectroscopically characterized acceptors A0, A1, FX, FA and FB in turn. This Prochlorococcus marinus (strain NATL2A) protein is Photosystem I iron-sulfur center.